Here is a 322-residue protein sequence, read N- to C-terminus: N-acetyl-gamma-glutamyl-phosphate reductase (322 aa).

The active site involves Cys-132.

This sequence belongs to the NAGSA dehydrogenase family. Type 1 subfamily.

The protein localises to the cytoplasm. The catalysed reaction is N-acetyl-L-glutamate 5-semialdehyde + phosphate + NADP(+) = N-acetyl-L-glutamyl 5-phosphate + NADPH + H(+). It participates in amino-acid biosynthesis; L-arginine biosynthesis; N(2)-acetyl-L-ornithine from L-glutamate: step 3/4. Catalyzes the NADPH-dependent reduction of N-acetyl-5-glutamyl phosphate to yield N-acetyl-L-glutamate 5-semialdehyde. The chain is N-acetyl-gamma-glutamyl-phosphate reductase from Bacteroides fragilis (strain ATCC 25285 / DSM 2151 / CCUG 4856 / JCM 11019 / LMG 10263 / NCTC 9343 / Onslow / VPI 2553 / EN-2).